The sequence spans 495 residues: MVYENPDGIRIGLEIHVQLNKLKTKMFCGCSTDYHNAAPNTHTCPICLGLPGTLPVLNKKVVEAAIKVGLALEGEIAEETQFHRKNYFYPDLPKGFQVTQYDYPIVSKGKVVIEGEDGEHVVGITRAHMEEDPGKLVHIGSIGKSKGVLIDYNRSGMPLIETVTEPDMRSPKEARRFLDKFRNILEYLDVFDGNLEGAMRVDANVSVHWGTRVEVKNISSHKGVERALLYEIMRQKNVIRRGGTIVQETRHFDEGRGVTLSMRTKEEAEDYRYFREPDLMPMRITDWIPAIKETLPELPDAKRTRFIEQYGITDMHARALTSKIMLADFYEGVCAKGVDPKIAATWTADVFLGELNYRDLAISSYGGKTIGFIHAKDPEVENSFKGSDMVELVTLFAEGKISDRAAVEVIRTILDGTEEKTPSQIIEEKGLFKAEDDLVTKAVAETIAENAAAVQDYLGGTEKSLNFLVGQVMKKTKGTADAKTARELILKELKG.

This sequence belongs to the GatB/GatE family. GatB subfamily. As to quaternary structure, heterotrimer of A, B and C subunits.

The catalysed reaction is L-glutamyl-tRNA(Gln) + L-glutamine + ATP + H2O = L-glutaminyl-tRNA(Gln) + L-glutamate + ADP + phosphate + H(+). It carries out the reaction L-aspartyl-tRNA(Asn) + L-glutamine + ATP + H2O = L-asparaginyl-tRNA(Asn) + L-glutamate + ADP + phosphate + 2 H(+). Allows the formation of correctly charged Asn-tRNA(Asn) or Gln-tRNA(Gln) through the transamidation of misacylated Asp-tRNA(Asn) or Glu-tRNA(Gln) in organisms which lack either or both of asparaginyl-tRNA or glutaminyl-tRNA synthetases. The reaction takes place in the presence of glutamine and ATP through an activated phospho-Asp-tRNA(Asn) or phospho-Glu-tRNA(Gln). The protein is Aspartyl/glutamyl-tRNA(Asn/Gln) amidotransferase subunit B of Methanosarcina acetivorans (strain ATCC 35395 / DSM 2834 / JCM 12185 / C2A).